The following is a 205-amino-acid chain: Small ribosomal subunit protein uS4 (205 aa).

Residues 94-172 (SRLDSIVYRM…TTPDYVSFDV (79 aa)) form the S4 RNA-binding domain.

This sequence belongs to the universal ribosomal protein uS4 family. As to quaternary structure, part of the 30S ribosomal subunit. Contacts protein S5. The interaction surface between S4 and S5 is involved in control of translational fidelity.

Its function is as follows. One of the primary rRNA binding proteins, it binds directly to 16S rRNA where it nucleates assembly of the body of the 30S subunit. With S5 and S12 plays an important role in translational accuracy. This is Small ribosomal subunit protein uS4 from Rickettsia bellii (strain OSU 85-389).